Consider the following 127-residue polypeptide: Aspartate 1-decarboxylase (127 aa).

S25 acts as the Schiff-base intermediate with substrate; via pyruvic acid in catalysis. S25 carries the post-translational modification Pyruvic acid (Ser). A substrate-binding site is contributed by T57. Y58 (proton donor) is an active-site residue. G73 to A75 is a substrate binding site.

It belongs to the PanD family. Heterooctamer of four alpha and four beta subunits. Pyruvate serves as cofactor. Is synthesized initially as an inactive proenzyme, which is activated by self-cleavage at a specific serine bond to produce a beta-subunit with a hydroxyl group at its C-terminus and an alpha-subunit with a pyruvoyl group at its N-terminus.

It localises to the cytoplasm. It carries out the reaction L-aspartate + H(+) = beta-alanine + CO2. Its pathway is cofactor biosynthesis; (R)-pantothenate biosynthesis; beta-alanine from L-aspartate: step 1/1. Its function is as follows. Catalyzes the pyruvoyl-dependent decarboxylation of aspartate to produce beta-alanine. This is Aspartate 1-decarboxylase from Clostridium botulinum (strain ATCC 19397 / Type A).